The following is a 514-amino-acid chain: Nitric oxide reductase transcription regulator NorR1 (514 aa).

A 4-aspartylphosphate modification is found at aspartate 54. The Sigma-54 factor interaction domain maps to 187–416 (IIGQSQAIAG…LEHVISRAAL (230 aa)). ATP contacts are provided by residues 215–222 (GETGVGKE) and 287–296 (EVGELPLSIQ). Residues 490 to 509 (WAKAARQLGMDASNLHKLAK) constitute a DNA-binding region (H-T-H motif).

It participates in nitrogen metabolism; nitrate reduction (denitrification) [regulation]. Its function is as follows. Required for the nitric oxide (NO) induced expression of NO reductase. Not required for expression of 2 other pathway members, nitrate reductase (nirS) and nitrous oxide reductase (nosZ). The protein is Nitric oxide reductase transcription regulator NorR1 (norR1) of Cupriavidus necator (strain ATCC 17699 / DSM 428 / KCTC 22496 / NCIMB 10442 / H16 / Stanier 337) (Ralstonia eutropha).